We begin with the raw amino-acid sequence, 534 residues long: Prolyl 4-hydroxylase subunit alpha-1 (534 aa).

Residues 1 to 17 (MIWVVLMMAILLPQSLA) form the signal peptide. Asn113 is a glycosylation site (N-linked (GlcNAc...) asparagine). The stretch at 205 to 238 (VSVLDYLSYAVYQQGDLDKALLLTKKLLELDPEH) is one TPR repeat. A glycan (N-linked (GlcNAc...) asparagine) is linked at Asn259. In terms of domain architecture, Fe2OG dioxygenase spans 411 to 519 (TAEELQVANY…KWVSNKWLHE (109 aa)). The Fe cation site is built by His429, Asp431, and His500. Lys510 lines the 2-oxoglutarate pocket.

This sequence belongs to the P4HA family. Heterotetramer of two alpha-1 chains and two beta chains (P4HB)(the beta chain is the multi-functional PDI), where P4HB plays the role of a structural subunit; this tetramer catalyzes the formation of 4-hydroxyproline in collagen. Requires Fe(2+) as cofactor. The cofactor is L-ascorbate. Expressed at least in brain, heart and lung.

The protein localises to the endoplasmic reticulum lumen. The catalysed reaction is L-prolyl-[collagen] + 2-oxoglutarate + O2 = trans-4-hydroxy-L-prolyl-[collagen] + succinate + CO2. Its activity is regulated as follows. Inhibited by poly(L-proline). Its function is as follows. Catalyzes the post-translational formation of 4-hydroxyproline in -Xaa-Pro-Gly- sequences in collagens and other proteins. This is Prolyl 4-hydroxylase subunit alpha-1 (P4ha1) from Mus musculus (Mouse).